Consider the following 178-residue polypeptide: RNA pyrophosphohydrolase (178 aa).

The region spanning 18-171 is the Nudix hydrolase domain; sequence PYRPCVGLMV…KRKVYEQVVA (154 aa). A Nudix box motif is present at residues 59 to 80; that stretch reads GGIDKGEDPAQAALRELYEETG.

It belongs to the Nudix hydrolase family. RppH subfamily. A divalent metal cation serves as cofactor.

Functionally, accelerates the degradation of transcripts by removing pyrophosphate from the 5'-end of triphosphorylated RNA, leading to a more labile monophosphorylated state that can stimulate subsequent ribonuclease cleavage. The sequence is that of RNA pyrophosphohydrolase from Brucella melitensis biotype 2 (strain ATCC 23457).